Reading from the N-terminus, the 58-residue chain is PI-actitoxin-Axm2a (58 aa).

The region spanning 7-57 (CLLPKKVGPCRAAVPRFYYNSDSGKCEGFTYGGCHANANNFKTKDECKNAC) is the BPTI/Kunitz inhibitor domain. Cystine bridges form between Cys-7–Cys-57, Cys-16–Cys-40, and Cys-32–Cys-53.

It belongs to the venom Kunitz-type family. Sea anemone type 2 potassium channel toxin subfamily. In terms of tissue distribution, expressed by acrorhagi.

Its subcellular location is the secreted. It is found in the nematocyst. Functionally, serine protease inhibitor that is strongly active against trypsin (1900 IU/mg) and moderately active against plasmin. Also shows weak inhibition against chymotrypsin (70%), elastase (38%) and the metalloprotease thermolysin (14%). The sequence is that of PI-actitoxin-Axm2a from Anthopleura aff. xanthogrammica (Sea anemone).